The primary structure comprises 365 residues: Protein AC54 (365 aa).

In terms of assembly, interacts with C42 and VP80. Interacts with protein 38K.

The protein localises to the virion. Structural protein that participates in nucleocapsid assembly. Plays an essential role in the proper localization of the major capsid protein VP39, and the minor capsid protein 38K into the capsid assembly site. The polypeptide is Protein AC54 (AC54) (Lepidoptera (butterflies and moths)).